A 206-amino-acid polypeptide reads, in one-letter code: Endoplasmic reticulum transmembrane protein YET-like (206 aa).

Residues 1–2 (ME) lie on the Lumenal side of the membrane. A helical transmembrane segment spans residues 3–23 (FLMTLVFLVLLVEIVFCTFFM). Residues 24 to 46 (LPVSMHLRKNVYNKLDKLFGGQN) are Cytoplasmic-facing. A helical membrane pass occupies residues 47–67 (AKIFLKVLALLVIIVFCDSIV). At 68–101 (NSYNINKKLHTPELTGAKFDRQNEYTRMFRYQRN) the chain is on the lumenal side. A helical transmembrane segment spans residues 102–122 (SYICGFCLYLFFLIYRSQGII). Over 123–206 (SQLSNVEASK…KKPKTQKKDD (84 aa)) the chain is Cytoplasmic. Positions 140–198 (KNNLNTVETLLSENEKLKTEIKDLKKMEKEHKAMKSQAENTTKEYLKLQEEYNQLLGKK) form a coiled coil. A Di-lysine motif motif is present at residues 203–206 (KKDD).

Belongs to the BCAP29/BCAP31 family.

The protein resides in the endoplasmic reticulum membrane. May play a role in anterograde transport of membrane proteins from the endoplasmic reticulum to the Golgi. The polypeptide is Endoplasmic reticulum transmembrane protein YET-like (Dictyostelium discoideum (Social amoeba)).